Consider the following 111-residue polypeptide: RNA polymerase-binding protein RbpA (111 aa).

This sequence belongs to the RNA polymerase-binding protein RbpA family. Forms a complex with the RNAP catalytic core and with free principal sigma factors.

Functionally, binds to RNA polymerase (RNAP), stimulating transcription from principal, but not alternative sigma factor promoters. The protein is RNA polymerase-binding protein RbpA of Mycobacterium tuberculosis (strain CDC 1551 / Oshkosh).